An 860-amino-acid chain; its full sequence is Paladin (860 aa).

Positions 1-24 are disordered; sequence MGTTASAAPQATLHERLHSDSMTD. Residue Gly2 is the site of N-myristoyl glycine attachment. A compositionally biased stretch (basic and acidic residues) spans 13-24; the sequence is LHERLHSDSMTD.

It belongs to the paladin family.

It is found in the cytoplasm. Its subcellular location is the cytosol. The sequence is that of Paladin (pald1) from Danio rerio (Zebrafish).